We begin with the raw amino-acid sequence, 320 residues long: MNTVGTPLLWGGFAVVVAIMLAIDLLLQGRRGAHAMTMKQAAAWSLVWVTLSLLFNAAFWWYLVQTEGRAVADPQALAFLTGYLIEKSLAVDNVFVWLMLFSYFSVPAALQRRVLVYGVLGAIVLRTIMIFTGSWLISQFDWILYIFGAFLLFTGVKMALAHEDESGIGDKPLVRWLRGHLRMTDTIDNEHFFVRKNGLLYATPLMLVLILVELSDVIFAVDSIPAIFAVTTDPFIVLTSNLFAILGLRAMYFLLAGVAERFSMLKYGLAVILVFIGIKMLIVDFYHIPIAVSLGVVFGILVMTFIINAWVNYRHDKQRG.

The Periplasmic segment spans residues 1 to 6; that stretch reads MNTVGT. Residues 7 to 27 form a helical membrane-spanning segment; sequence PLLWGGFAVVVAIMLAIDLLL. At 28–43 the chain is on the cytoplasmic side; the sequence is QGRRGAHAMTMKQAAA. A helical transmembrane segment spans residues 44–64; that stretch reads WSLVWVTLSLLFNAAFWWYLV. At 65-89 the chain is on the periplasmic side; the sequence is QTEGRAVADPQALAFLTGYLIEKSL. Residues 90 to 110 form a helical membrane-spanning segment; sequence AVDNVFVWLMLFSYFSVPAAL. At 111–113 the chain is on the cytoplasmic side; that stretch reads QRR. The chain crosses the membrane as a helical span at residues 114-134; it reads VLVYGVLGAIVLRTIMIFTGS. Position 135 (Trp135) is a topological domain, periplasmic. The helical transmembrane segment at 136–156 threads the bilayer; it reads LISQFDWILYIFGAFLLFTGV. Over 157–198 the chain is Cytoplasmic; sequence KMALAHEDESGIGDKPLVRWLRGHLRMTDTIDNEHFFVRKNG. The helical transmembrane segment at 199-219 threads the bilayer; it reads LLYATPLMLVLILVELSDVIF. The Periplasmic portion of the chain corresponds to 220–225; it reads AVDSIP. The helical transmembrane segment at 226–246 threads the bilayer; sequence AIFAVTTDPFIVLTSNLFAIL. At 247 to 261 the chain is on the cytoplasmic side; it reads GLRAMYFLLAGVAER. A helical membrane pass occupies residues 262 to 282; the sequence is FSMLKYGLAVILVFIGIKMLI. The Periplasmic portion of the chain corresponds to 283-286; that stretch reads VDFY. The helical transmembrane segment at 287 to 307 threads the bilayer; sequence HIPIAVSLGVVFGILVMTFII. Topologically, residues 308–320 are cytoplasmic; the sequence is NAWVNYRHDKQRG.

It belongs to the TerC family.

It is found in the cell inner membrane. Its function is as follows. Has been proposed to be a redox modulator. The protein is Putative membrane-bound redox modulator Alx (alx) of Shigella flexneri.